The chain runs to 237 residues: 1-(5-phosphoribosyl)-5-[(5-phosphoribosylamino)methylideneamino] imidazole-4-carboxamide isomerase (237 aa).

Catalysis depends on D8, which acts as the Proton acceptor. Catalysis depends on D129, which acts as the Proton donor.

This sequence belongs to the HisA/HisF family.

The protein resides in the cytoplasm. The catalysed reaction is 1-(5-phospho-beta-D-ribosyl)-5-[(5-phospho-beta-D-ribosylamino)methylideneamino]imidazole-4-carboxamide = 5-[(5-phospho-1-deoxy-D-ribulos-1-ylimino)methylamino]-1-(5-phospho-beta-D-ribosyl)imidazole-4-carboxamide. It functions in the pathway amino-acid biosynthesis; L-histidine biosynthesis; L-histidine from 5-phospho-alpha-D-ribose 1-diphosphate: step 4/9. The chain is 1-(5-phosphoribosyl)-5-[(5-phosphoribosylamino)methylideneamino] imidazole-4-carboxamide isomerase from Roseiflexus sp. (strain RS-1).